We begin with the raw amino-acid sequence, 184 residues long: Oligoribonuclease (184 aa).

The region spanning 8–171 is the Exonuclease domain; the sequence is LIWIDLEMTG…DDIRESIAEL (164 aa). Tyrosine 129 is an active-site residue.

The protein belongs to the oligoribonuclease family.

The protein resides in the cytoplasm. In terms of biological role, 3'-to-5' exoribonuclease specific for small oligoribonucleotides. The sequence is that of Oligoribonuclease from Pasteurella multocida (strain Pm70).